The chain runs to 321 residues: tRNA(Ile)-lysidine synthase (321 aa).

21-26 provides a ligand contact to ATP; sequence SYGSDS.

It belongs to the tRNA(Ile)-lysidine synthase family.

Its subcellular location is the cytoplasm. It catalyses the reaction cytidine(34) in tRNA(Ile2) + L-lysine + ATP = lysidine(34) in tRNA(Ile2) + AMP + diphosphate + H(+). Ligates lysine onto the cytidine present at position 34 of the AUA codon-specific tRNA(Ile) that contains the anticodon CAU, in an ATP-dependent manner. Cytidine is converted to lysidine, thus changing the amino acid specificity of the tRNA from methionine to isoleucine. The sequence is that of tRNA(Ile)-lysidine synthase from Campylobacter jejuni subsp. jejuni serotype O:2 (strain ATCC 700819 / NCTC 11168).